A 661-amino-acid polypeptide reads, in one-letter code: UvrABC system protein C (661 aa).

Residues 52–130 (HKPGVYRMVD…IKRLHPRFNV (79 aa)) form the GIY-YIG domain. One can recognise a UVR domain in the interval 240 to 275 (QSIKNDMVQAMHKAAKNFDFEQAAAYRDRLSALSHI).

It belongs to the UvrC family. Interacts with UvrB in an incision complex.

The protein resides in the cytoplasm. The UvrABC repair system catalyzes the recognition and processing of DNA lesions. UvrC both incises the 5' and 3' sides of the lesion. The N-terminal half is responsible for the 3' incision and the C-terminal half is responsible for the 5' incision. This is UvrABC system protein C from Bartonella henselae (strain ATCC 49882 / DSM 28221 / CCUG 30454 / Houston 1) (Rochalimaea henselae).